The chain runs to 766 residues: Serine/threonine-protein kinase PKH1 (766 aa).

The tract at residues Met-1–Gln-52 is disordered. Residues Gly-38–Gln-52 show a composition bias toward polar residues. In terms of domain architecture, Protein kinase spans Phe-125 to Phe-391. Residues Ser-135–Ser-137 and Lys-154 each bind ATP. The PIF-pocket stretch occupies residues Leu-156–Phe-201. ATP is bound by residues Glu-204–Ala-206 and Asp-210. The Proton acceptor role is filled by Asp-249. Glu-253 and Asp-267 together coordinate ATP. 2 positions are modified to phosphoserine: Ser-294 and Ser-296. A compositionally biased stretch (polar residues) spans Thr-476–Asn-495. Disordered stretches follow at residues Thr-476–Arg-529 and Pro-725–Asn-745. Low complexity predominate over residues Ser-511–Ser-521. Residues Pro-735 to Asn-745 are compositionally biased toward polar residues.

It belongs to the protein kinase superfamily. AGC Ser/Thr protein kinase family. PDPK1 subfamily.

It catalyses the reaction L-seryl-[protein] + ATP = O-phospho-L-seryl-[protein] + ADP + H(+). It carries out the reaction L-threonyl-[protein] + ATP = O-phospho-L-threonyl-[protein] + ADP + H(+). Functionally, activates YPK1 by phosphorylating of a threonine residue. The polypeptide is Serine/threonine-protein kinase PKH1 (PKH1) (Saccharomyces cerevisiae (strain ATCC 204508 / S288c) (Baker's yeast)).